Consider the following 181-residue polypeptide: MSFQEVWEKEPMKKPRIQKVTVNFGVGEAGDRLTIGAKVIEELTGQSPVRTLAKQTNPAFGIRKKLPIGLKVTLRGKNAEEFLGNAFSAFKTCGKVLYASSFDQVGNFSFGVPEHIDFPGQKYDPSIGIYGMDICVTFEKSGYRVKSRKVKRSHIPKKHLVTKDEAIEYIQAKFDTEVVRE.

Belongs to the universal ribosomal protein uL5 family. In terms of assembly, part of the 50S ribosomal subunit; contacts the 5S rRNA and probably tRNA. Forms a bridge to the 30S subunit in the 70S ribosome.

Its function is as follows. This is one of the proteins that bind and probably mediate the attachment of the 5S RNA into the large ribosomal subunit, where it forms part of the central protuberance. In the 70S ribosome it contacts protein S13 of the 30S subunit (bridge B1b), connecting the 2 subunits; this bridge is implicated in subunit movement. May contact the P site tRNA; the 5S rRNA and some of its associated proteins might help stabilize positioning of ribosome-bound tRNAs. The sequence is that of Large ribosomal subunit protein uL5 from Methanococcus maripaludis (strain C7 / ATCC BAA-1331).